Here is a 227-residue protein sequence, read N- to C-terminus: Phosphoglycolate phosphatase (227 aa).

The active-site Nucleophile is the D9. The Mg(2+) site is built by D9, D11, and D171.

This sequence belongs to the HAD-like hydrolase superfamily. CbbY/CbbZ/Gph/YieH family. It depends on Mg(2+) as a cofactor.

It catalyses the reaction 2-phosphoglycolate + H2O = glycolate + phosphate. Its pathway is organic acid metabolism; glycolate biosynthesis; glycolate from 2-phosphoglycolate: step 1/1. Its function is as follows. Specifically catalyzes the dephosphorylation of 2-phosphoglycolate. Is involved in the dissimilation of the intracellular 2-phosphoglycolate formed during the DNA repair of 3'-phosphoglycolate ends, a major class of DNA lesions induced by oxidative stress. The polypeptide is Phosphoglycolate phosphatase (Mesorhizobium japonicum (strain LMG 29417 / CECT 9101 / MAFF 303099) (Mesorhizobium loti (strain MAFF 303099))).